The primary structure comprises 838 residues: V-type proton ATPase 116 kDa subunit a 1 (838 aa).

The Cytoplasmic segment spans residues 1 to 388 (MGELFRSEEM…DAYGIGTYRE (388 aa)). A helical membrane pass occupies residues 389-407 (INPAPYTIITFPFLFAVMF). The Vacuolar portion of the chain corresponds to 408-409 (GD). A helical membrane pass occupies residues 410-426 (FGHGILMTLIAIWMVLR). Residues 427–441 (ESRILSQKSDNEMFS) are Cytoplasmic-facing. Residues 442–471 (TVFSGRYIILLMGLFSTYTGLIYNDCFSKS) traverse the membrane as a helical segment. Residues 472–535 (LNMFGSSWSV…ANNKLAFLNS (64 aa)) lie on the Vacuolar side of the membrane. A helical transmembrane segment spans residues 536-555 (FKMKMSVILGIIHMLFGVML). At 556–573 (SLLNHIYFKKPLNIYLGF) the chain is on the cytoplasmic side. A helical transmembrane segment spans residues 574-594 (IPEMIFMSSLFGYLVILIFYK). Topologically, residues 595–639 (WTAYDAHTSKEAPSPLIHFINMFLFSYGDTSNKMLYRGQKGIQCF) are vacuolar. The helical transmembrane segment at 640–659 (LVVVALLCVPWMLVAKPLVL) threads the bilayer. The Cytoplasmic portion of the chain corresponds to 660–725 (RHQYLRRKHL…DTVVYQAIHT (66 aa)). Residues 726 to 750 (IEYCLGCISNTASYLRLWALSLAHA) form a helical membrane-spanning segment. The Vacuolar portion of the chain corresponds to 751–771 (QLSEVLWTMVIHTGLSVRSLA). A helical transmembrane segment spans residues 772 to 810 (GGFGLVFIFAAFATLTVAILLVMEGLSAFLHALRLHWIE). The Cytoplasmic segment spans residues 811–838 (FQNKFYTGTGFKFLPFSFDPIREGKFDD).

Belongs to the V-ATPase 116 kDa subunit family. In terms of assembly, V-ATPase is a heteromultimeric enzyme made up of two complexes: the ATP-hydrolytic V1 complex and the proton translocation V0 complex. The V1 complex consists of three catalytic AB heterodimers that form a heterohexamer, three peripheral stalks each consisting of EG heterodimers, one central rotor including subunits D and F, and the regulatory subunits C and H. The proton translocation complex V0 consists of the proton transport subunit a, a ring of proteolipid subunits c9c'', rotary subunit d, subunits e and f, and two accessory subunits. As to expression, detected in brain (at protein level). Highest expression in brain, intermediate levels in kidney, and relatively low levels in bone and liver.

The protein resides in the cytoplasmic vesicle. Its subcellular location is the clathrin-coated vesicle membrane. It is found in the secretory vesicle. The protein localises to the synaptic vesicle membrane. It localises to the melanosome. Subunit of the V0 complex of vacuolar(H+)-ATPase (V-ATPase), a multisubunit enzyme composed of a peripheral complex (V1) that hydrolyzes ATP and a membrane integral complex (V0) that translocates protons. V-ATPase is responsible for acidifying and maintaining the pH of intracellular compartments and in some cell types, is targeted to the plasma membrane, where it is responsible for acidifying the extracellular environment. Required for assembly and activity of the vacuolar ATPase. The sequence is that of V-type proton ATPase 116 kDa subunit a 1 (ATP6V0A1) from Gallus gallus (Chicken).